The following is a 606-amino-acid chain: WD repeat-containing protein 1 (606 aa).

13 WD repeats span residues 4–45 (EIKK…LRNI), 48–87 (PAIA…IWDT), 93–135 (LLKY…LWDT), 138–176 (SVGE…FFEG), 180–218 (KFKF…IYDG), 224–263 (VCAL…IWDV), 270–306 (STFP…YLDK), 311–351 (KPLR…YWDS), 358–408 (SFSG…KLDV), 432–474 (LKDQ…VYSI), 480–518 (KDEG…VFSV), 523–561 (SENN…VWTL), and 566–604 (TKVK…EWTI). Lysine 28, lysine 81, lysine 95, and lysine 115 each carry N6-acetyllysine. Residue tyrosine 238 is modified to Phosphotyrosine. At lysine 480 the chain carries N6-acetyllysine.

The protein belongs to the WD repeat AIP1 family.

The protein localises to the cytoplasm. The protein resides in the cytoskeleton. It is found in the cell projection. Its subcellular location is the podosome. Its function is as follows. Induces disassembly of actin filaments in conjunction with ADF/cofilin family proteins. Enhances cofilin-mediated actin severing. Involved in cytokinesis. Involved in chemotactic cell migration by restricting lamellipodial membrane protrusions. Involved in myocardium sarcomere organization. Required for cardiomyocyte growth at the postnatal and maintenance at the adult stage. Involved in neutrophil actin dynamics and migration. Involved in megakaryocyte maturation and platelet shedding. Required for the establishment of planar cell polarity (PCP) during follicular epithelium development and for cell shape changes during PCP; the function seems to implicate cooperation with CFL1 and/or DSTN/ADF. Involved in the generation/maintenance of cortical tension. Involved in assembly and maintenance of epithelial apical cell junctions and plays a role in the organization of the perijunctional actomyosin belt. This chain is WD repeat-containing protein 1 (Wdr1), found in Mus musculus (Mouse).